A 106-amino-acid chain; its full sequence is Protein U4 (106 aa).

A helical transmembrane segment spans residues 5-25; the sequence is FFISIILFVVLLNPSLIINMV.

This sequence belongs to the nanovirus U4 protein family.

Its subcellular location is the membrane. In Cicer arietinum (Chickpea), this protein is Protein U4 (DNA-U4).